The chain runs to 212 residues: MSNFKNIIPKRTYLERGQAKHRLHLGELEKKVDYGKRREIYKKKKKIENVLKEKIMTKNPDEFHTGMVHSRVTEDNVLVREEKVLKKEVQLKNKRQELKEQTNDLYNKLKKINKRLSNYQMNIPLRYVFNNSHELYNENEIYTLKAENKKLKKRGDLIQKKYNGLINMKKNLLDQIRKLDNKYITTYHKVDGYNIVTDKGKTPYRLYQPRLK.

Belongs to the UTP11 family. Component of the ribosomal small subunit (SSU) processome.

Its subcellular location is the nucleus. The protein localises to the nucleolus. Its function is as follows. Involved in nucleolar processing of pre-18S ribosomal RNA. This Plasmodium falciparum (isolate 3D7) protein is Probable U3 small nucleolar RNA-associated protein 11.